Reading from the N-terminus, the 61-residue chain is uncharacterized protein (61 aa).

Positions 36 to 61 (RLTDVPPQPNSPPDNVFNPDQPRMGP) are disordered.

It belongs to the ART2/RRT15 family.

This is an uncharacterized protein from Saccharomyces cerevisiae (strain ATCC 204508 / S288c) (Baker's yeast).